The sequence spans 1322 residues: MDVFSFVKIAKLSSHRTKSSGWPPPSGTWGLSQVPPYGWEMTANRDGRDYFINHMTQAIPFDDPRLESCQIIPPAPRKVEMRRDPVLGFGFVAGSEKPVVVRSVTPGGPSEGKLIPGDQIVMINDEPVSAAPRERVIDLVRSCKESILLTVIQPYPSPKSAFISAAKKARLKSNPVKVRFSEEVIINGQVSETVKDNSLLFMPNVLKVYLENGQTKSFRFDCSTSIKDVILTLQEKLSIKGIEHFSLMLEQRTEGAGTKLLLLHEQETLTQVTQRPSSHKMRCLFRISFVPKDPIDLLRRDPVAFEYLYVQSCNDVVQERFGPELKYDIALRLAALQMYIATVTTKQTQKISLKYIEKEWGLETFLPSAVLQSMKEKNIKKALSHLVKANQNLVPPGKKLSALQAKVHYLKFLSDLRLYGGRVFKATLVQAEKRSEVTLLVGPRYGISHVINTKTNLVALLADFSHVNRIEMFSEEESLVRVELHVLDVKPITLLMESSDAMNLACLTAGYYRLLVDSRRSIFNMANKKNTATQETGPENKGKHNLLGPDWNCIPQMTTFIGEGEQEAQITYIDSKQKTVEITDSTMCPKEHRHLYIDNAYSSDGLNQQLSQPGEAPCEADYRSLAQRSLLTLSGPETLKKAQESPRGAKVSFIFGDFALDDGISPPTLGYETLLDEGPEMLEKQRNLYIGSANDMKGLDLTPEAEGIQFVENSVYANIGDVKSFQAAEGIEEPLLHDICYAENTDDAEDEDEVSCEEDLVVGEMNQPAILNLSGSSDDIIDLTSLPPPEGDDNEDDFLLRSLNMAIAAPPPGFRDSSDEEDSQSQAASFPEDKEKGSSLQNDEIPVSLIDAVPTSAEGKCEKGLDNAVVSTLGALEALSVSEEQQTSDNSGVAILRAYSPESSSDSGNETNSSEMTESSELATAQKQSENLSRMFLATHEGYHPLAEEQTEFPASKTPAGGLPPKSSHALAARPATDLPPKVVPSKQLLHSDHMEMEPETMETKSVTDYFSKLHMGSVAYSCTSKRKSKLADGEGKAPPNGNTTGKKQQGTKTAEMEEEASGKFGTVSSRDSQHLSTFNLERTAFRKDSQRWYVATEGGMAEKSGLEAATGKTFPRASGLGAREAEGKEEGAPDGETSDGSGLGQGDRFLTDVTCASSAKDLDNPEDADSSTCDHPSKLPEADESVARLCDYHLAKRMSSLQSEGHFSLQSSQGSSVDAGCGTGSSGSACATPVESPLCPSLGKHLIPDASGKGVNYIPSEERAPGLPNHGATFKELHPQTEGMCPRMTVPALHTAINTEPLFGTLRDGCHRLPKIKETTV.

The 34-residue stretch at Gln33–Leu66 folds into the WW domain. Positions Lys78 to Tyr155 constitute a PDZ domain. The FERM domain maps to Asn204–Arg519. 7 disordered regions span residues Ala809 to Val847, Ser900 to Lys927, Glu952 to Val983, Arg1027 to Asn1080, Ser1105 to Asp1148, Ala1160 to Leu1180, and His1207 to Ser1227. The span at Glu902 to Glu921 shows a compositional bias: low complexity. The segment covering Asn1041–Thr1054 has biased composition (low complexity). Residues Thr1067–Asn1080 show a composition bias toward polar residues. The span at His1207 to Ser1217 shows a compositional bias: polar residues.

As to quaternary structure, interacts (via C-terminus) with DLG1, DLG2, DLG3 and DLG4/PSD95. Interacts (via N-terminus) with ARHGEF7; the interaction is mediated by the PDZ domain. Interacts with GPSM2 (via TPR repeat region).

It is found in the cell projection. The protein localises to the dendritic spine. Positive regulator of dendritic spine morphogenesis and density. Required for the maintenance of excitatory synaptic transmission. Binds phosphatidylinositol 4,5-bisphosphate. In Homo sapiens (Human), this protein is FERM and PDZ domain-containing protein 4 (FRMPD4).